Reading from the N-terminus, the 435-residue chain is GTPase Der (435 aa).

2 consecutive EngA-type G domains span residues 4–167 and 175–350; these read KIVA…SKND and TKIA…QSLS. Residues 10–17, 57–61, 119–122, 181–188, 228–232, and 293–296 each bind GTP; these read GRPNVGKS, DTGGI, NKYD, DTAGI, and NKWD. The region spanning 351–435 is the KH-like domain; the sequence is VKVKTYVLNE…PINLIFRERK (85 aa).

Belongs to the TRAFAC class TrmE-Era-EngA-EngB-Septin-like GTPase superfamily. EngA (Der) GTPase family. As to quaternary structure, associates with the 50S ribosomal subunit.

Functionally, GTPase that plays an essential role in the late steps of ribosome biogenesis. This chain is GTPase Der, found in Mycoplasma mycoides subsp. mycoides SC (strain CCUG 32753 / NCTC 10114 / PG1).